The chain runs to 275 residues: Large ribosomal subunit protein uL2 (275 aa).

Disordered stretches follow at residues 1 to 20 (MAVK…TTAD) and 214 to 275 (WLGR…TRRK). Residues 255 to 275 (KGLKTRRKRKTSDRFIVTRRK) show a composition bias toward basic residues.

This sequence belongs to the universal ribosomal protein uL2 family. Part of the 50S ribosomal subunit. Forms a bridge to the 30S subunit in the 70S ribosome.

Its function is as follows. One of the primary rRNA binding proteins. Required for association of the 30S and 50S subunits to form the 70S ribosome, for tRNA binding and peptide bond formation. It has been suggested to have peptidyltransferase activity; this is somewhat controversial. Makes several contacts with the 16S rRNA in the 70S ribosome. In Deinococcus radiodurans (strain ATCC 13939 / DSM 20539 / JCM 16871 / CCUG 27074 / LMG 4051 / NBRC 15346 / NCIMB 9279 / VKM B-1422 / R1), this protein is Large ribosomal subunit protein uL2 (rplB).